Here is a 219-residue protein sequence, read N- to C-terminus: Bacterial microcompartment shell protein EutL (219 aa).

BMC circularly permuted domains lie at 1–113 (MPAL…GAAF) and 114–215 (QWAN…ARNP). Positions 45, 46, 83, and 113 each coordinate ethanolamine. Residues 45-46 (DD) form a part of the acidic patch lining the small pore region. Glu157 contributes to the Zn(2+) binding site. 183–185 (TNY) provides a ligand contact to ethanolamine.

It belongs to the EutL/PduB family. As to quaternary structure, homotrimerizes to form a pseudohexamer. The trimers form a two-dimensional array about 37 Angstroms thick.

The protein resides in the bacterial microcompartment. The protein operates within amine and polyamine degradation; ethanolamine degradation. Its function is as follows. A component of the bacterial microcompartment (BMC) shell dedicated to ethanolamine degradation. Two crystal forms have been seen; a form with a closed central pore that has 3 very small (1.1-2.2 Angstroms) channels per trimer lined by acidic and aromatic residues. A form with a large central pore (8-12 Angstroms) has also been seen; this is probably a functional pore which allows molecules to enter and exit the BMC in a selective, gated manner. Another group only sees the central pore in the presence of Zn(2+); soaking crystals in ZnCl(2) leads to dramatic conformational changes that open a central pore of about 12 Angstroms. Whether Zn(2+) binding is physiologically relevant is unclear, however it suggests a gating mechanism exists. Ethanolamine-binding by the small channels has been hypothesized to stabilize the EutL central pore in a closed (non-transporting) state. An open pore is thought to be large enough to transport ATP and/or cobalamin. The polypeptide is Bacterial microcompartment shell protein EutL (eutL) (Escherichia coli (strain K12)).